An 83-amino-acid chain; its full sequence is U5-theraphotoxin-Hs1d (83 aa).

Positions 1–21 (MKTSMFLTLTGLVLLFVVCYA) are cleaved as a signal peptide. Positions 22–49 (SESEEKEFPKELLSSIFAADSDFKVEER) are excised as a propeptide. Intrachain disulfides connect Cys-51-Cys-63, Cys-56-Cys-68, and Cys-62-Cys-75.

This sequence belongs to the neurotoxin 10 (Hwtx-1) family. 51 (Hntx-8) subfamily. Hntx-8 sub-subfamily. Expressed by the venom gland.

The protein localises to the secreted. Its function is as follows. Agglutinates erythrocytes. The sequence is that of U5-theraphotoxin-Hs1d from Cyriopagopus schmidti (Chinese bird spider).